The sequence spans 737 residues: Polyribonucleotide nucleotidyltransferase (737 aa).

Mg(2+)-binding residues include D489 and D495. The 60-residue stretch at 556 to 615 folds into the KH domain; that stretch reads PKIDTIKIDVDKIKIVIGKGGETIDKIIAETGVKIDIDEEGNVSIYSSDQDAINRAKEII. One can recognise an S1 motif domain in the interval 625 to 693; sequence DEVYRAKVVR…EKGRIDASMK (69 aa). Residues 691 to 737 form a disordered region; the sequence is SMKALLPRPPKPEHDEKGEKSERPHRPRHQKDHKPKKEFTETPKDSE. Over residues 700–714 the composition is skewed to basic and acidic residues; sequence PKPEHDEKGEKSERP. Positions 715 to 724 are enriched in basic residues; that stretch reads HRPRHQKDHK. A compositionally biased stretch (basic and acidic residues) spans 725-737; sequence PKKEFTETPKDSE.

This sequence belongs to the polyribonucleotide nucleotidyltransferase family. Mg(2+) serves as cofactor.

Its subcellular location is the cytoplasm. It carries out the reaction RNA(n+1) + phosphate = RNA(n) + a ribonucleoside 5'-diphosphate. Involved in mRNA degradation. Catalyzes the phosphorolysis of single-stranded polyribonucleotides processively in the 3'- to 5'-direction. This is Polyribonucleotide nucleotidyltransferase from Streptococcus pneumoniae (strain JJA).